A 565-amino-acid chain; its full sequence is uncharacterized protein (565 aa).

Transmembrane regions (helical) follow at residues 8–28 (ISFI…GIFF), 43–63 (LAIF…LALI), 95–115 (MTYL…ICSI), 137–157 (WLIW…IPPL), 167–187 (MVVS…GFIV), 227–247 (FTGI…FFAY), 268–288 (WALF…AVAL), 314–334 (IVFG…INGF), 367–387 (VVGV…FTVI), 424–444 (ATWT…GAIV), 460–480 (FLPA…VTII), 482–502 (PFIN…TVLG), and 516–536 (VMLI…VYVE).

To M.pneumoniae MPN_095 and MPN_096.

It localises to the cell membrane. This is an uncharacterized protein from Mycoplasma pneumoniae (strain ATCC 29342 / M129 / Subtype 1) (Mycoplasmoides pneumoniae).